Here is a 151-residue protein sequence, read N- to C-terminus: Large-conductance mechanosensitive channel (151 aa).

The next 2 membrane-spanning stretches (helical) occupy residues glycine 12 to threonine 32 and valine 71 to valine 91. The interval alanine 122–glutamine 151 is disordered.

The protein belongs to the MscL family. Homopentamer.

It localises to the cell membrane. Functionally, channel that opens in response to stretch forces in the membrane lipid bilayer. May participate in the regulation of osmotic pressure changes within the cell. In Mycobacterium tuberculosis (strain CDC 1551 / Oshkosh), this protein is Large-conductance mechanosensitive channel.